The chain runs to 706 residues: Polyribonucleotide nucleotidyltransferase (706 aa).

Asp-485 and Asp-491 together coordinate Mg(2+). Positions 552–611 (PRMLKMKIHPDKIREVIGSGGKTINKIIEDTGVKIDIENDGTIFIAAQTQEAGELALSII) constitute a KH domain. Residues 621–689 (GDIFKGKVIK…QQGKVSLSRK (69 aa)) form the S1 motif domain.

Belongs to the polyribonucleotide nucleotidyltransferase family. Mg(2+) serves as cofactor.

The protein resides in the cytoplasm. The catalysed reaction is RNA(n+1) + phosphate = RNA(n) + a ribonucleoside 5'-diphosphate. Its function is as follows. Involved in mRNA degradation. Catalyzes the phosphorolysis of single-stranded polyribonucleotides processively in the 3'- to 5'-direction. This Alkaliphilus oremlandii (strain OhILAs) (Clostridium oremlandii (strain OhILAs)) protein is Polyribonucleotide nucleotidyltransferase.